Reading from the N-terminus, the 69-residue chain is Protein transport protein Sec61 subunit gamma (69 aa).

Over 1 to 40 the chain is Cytoplasmic; it reads MDILEETAAPLKDFAKNSIRLFKKCTKPDAQEFQKIALAT. A helical membrane pass occupies residues 41 to 61; it reads LIGFAIMGFIGFFVKLIHIPI. At 62–69 the chain is on the extracellular side; the sequence is NNILVGGV.

This sequence belongs to the SecE/SEC61-gamma family. As to quaternary structure, heterotrimeric complex composed of SEC61-alpha, SEC61-beta and SEC61-gamma.

The protein localises to the endoplasmic reticulum membrane. Necessary for protein translocation in the endoplasmic reticulum. The chain is Protein transport protein Sec61 subunit gamma (sec61g) from Dictyostelium discoideum (Social amoeba).